The primary structure comprises 282 residues: D-alanine aminotransferase (282 aa).

Tyr-32 provides a ligand contact to substrate. Arg-51 lines the pyridoxal 5'-phosphate pocket. Arg-99 and His-101 together coordinate substrate. Lys-146 functions as the Proton acceptor in the catalytic mechanism. Lys-146 is subject to N6-(pyridoxal phosphate)lysine. Glu-178 provides a ligand contact to pyridoxal 5'-phosphate.

Belongs to the class-IV pyridoxal-phosphate-dependent aminotransferase family. In terms of assembly, homodimer. Pyridoxal 5'-phosphate is required as a cofactor.

It carries out the reaction D-alanine + 2-oxoglutarate = D-glutamate + pyruvate. Functionally, acts on the D-isomers of alanine, leucine, aspartate, glutamate, aminobutyrate, norvaline and asparagine. The enzyme transfers an amino group from a substrate D-amino acid to the pyridoxal phosphate cofactor to form pyridoxamine and an alpha-keto acid in the first half-reaction. The second half-reaction is the reverse of the first, transferring the amino group from the pyridoxamine to a second alpha-keto acid to form the product D-amino acid via a ping-pong mechanism. This is an important process in the formation of D-alanine and D-glutamate, which are essential bacterial cell wall components. The polypeptide is D-alanine aminotransferase (dat) (Staphylococcus haemolyticus).